A 373-amino-acid chain; its full sequence is 4-hydroxy-3-methylbut-2-en-1-yl diphosphate synthase (flavodoxin) (373 aa).

Positions 270, 273, 305, and 312 each coordinate [4Fe-4S] cluster.

The protein belongs to the IspG family. [4Fe-4S] cluster is required as a cofactor.

The catalysed reaction is (2E)-4-hydroxy-3-methylbut-2-enyl diphosphate + oxidized [flavodoxin] + H2O + 2 H(+) = 2-C-methyl-D-erythritol 2,4-cyclic diphosphate + reduced [flavodoxin]. It functions in the pathway isoprenoid biosynthesis; isopentenyl diphosphate biosynthesis via DXP pathway; isopentenyl diphosphate from 1-deoxy-D-xylulose 5-phosphate: step 5/6. Its function is as follows. Converts 2C-methyl-D-erythritol 2,4-cyclodiphosphate (ME-2,4cPP) into 1-hydroxy-2-methyl-2-(E)-butenyl 4-diphosphate. The sequence is that of 4-hydroxy-3-methylbut-2-en-1-yl diphosphate synthase (flavodoxin) from Sodalis glossinidius (strain morsitans).